The primary structure comprises 454 residues: NADP-specific glutamate dehydrogenase 1 (454 aa).

Lysine 110 is a catalytic residue. Position 174–203 (174–203 (GVLTGKGLNWGGSLIRPEATGYGLVYYTQA)) interacts with NAD(+).

It belongs to the Glu/Leu/Phe/Val dehydrogenases family. Homohexamer.

The catalysed reaction is L-glutamate + NADP(+) + H2O = 2-oxoglutarate + NH4(+) + NADPH + H(+). The chain is NADP-specific glutamate dehydrogenase 1 (GDH1) from Saccharomyces uvarum (strain ATCC 76518 / CBS 7001 / CLIB 283 / NBRC 10550 / MCYC 623 / NCYC 2669 / NRRL Y-11845) (Yeast).